Reading from the N-terminus, the 463-residue chain is Flotillin-like protein 2 (463 aa).

Cys35 carries S-palmitoyl cysteine lipidation. A coiled-coil region spans residues Glu305 to Glu354.

This sequence belongs to the band 7/mec-2 family. Flotillin subfamily. May be palmitoylated.

The protein localises to the cell membrane. It is found in the membrane. The protein resides in the caveola. May act as a scaffolding protein within caveolar membranes, functionally participating in formation of caveolae or caveolae-like vesicles. The polypeptide is Flotillin-like protein 2 (FLOT2) (Arabidopsis thaliana (Mouse-ear cress)).